Here is a 289-residue protein sequence, read N- to C-terminus: Acetyl-coenzyme A carboxylase carboxyl transferase subunit beta (289 aa).

One can recognise a CoA carboxyltransferase N-terminal domain in the interval 28–289 (LWSKCPSCEA…ALLQKLPAAA (262 aa)). 4 residues coordinate Zn(2+): cysteine 32, cysteine 35, cysteine 51, and cysteine 54. The C4-type zinc finger occupies 32–54 (CPSCEAVLYATDLENNLQVCPKC).

This sequence belongs to the AccD/PCCB family. As to quaternary structure, acetyl-CoA carboxylase is a heterohexamer composed of biotin carboxyl carrier protein (AccB), biotin carboxylase (AccC) and two subunits each of ACCase subunit alpha (AccA) and ACCase subunit beta (AccD). Zn(2+) is required as a cofactor.

The protein localises to the cytoplasm. The catalysed reaction is N(6)-carboxybiotinyl-L-lysyl-[protein] + acetyl-CoA = N(6)-biotinyl-L-lysyl-[protein] + malonyl-CoA. The protein operates within lipid metabolism; malonyl-CoA biosynthesis; malonyl-CoA from acetyl-CoA: step 1/1. Functionally, component of the acetyl coenzyme A carboxylase (ACC) complex. Biotin carboxylase (BC) catalyzes the carboxylation of biotin on its carrier protein (BCCP) and then the CO(2) group is transferred by the transcarboxylase to acetyl-CoA to form malonyl-CoA. In Dechloromonas aromatica (strain RCB), this protein is Acetyl-coenzyme A carboxylase carboxyl transferase subunit beta.